The sequence spans 129 residues: Fluoride-specific ion channel FluC 2 (129 aa).

4 helical membrane passes run 3–23 (FLYV…MNLW), 32–52 (ATLA…RFLA), 59–79 (LVLL…FSAF), and 90–110 (GAWL…LIMV). G71 and T74 together coordinate Na(+).

The protein belongs to the fluoride channel Fluc/FEX (TC 1.A.43) family.

Its subcellular location is the cell membrane. The catalysed reaction is fluoride(in) = fluoride(out). Its activity is regulated as follows. Na(+) is not transported, but it plays an essential structural role and its presence is essential for fluoride channel function. Its function is as follows. Fluoride-specific ion channel. Important for reducing fluoride concentration in the cell, thus reducing its toxicity. This chain is Fluoride-specific ion channel FluC 2, found in Listeria monocytogenes serovar 1/2a (strain ATCC BAA-679 / EGD-e).